Reading from the N-terminus, the 527-residue chain is Calcium and calcium/calmodulin-dependent serine/threonine-protein kinase (527 aa).

The Protein kinase domain maps to 12–314 (YEVSEILGRG…AQELLSDPWV (303 aa)). 18-26 (LGRGGFSVV) is an ATP binding site. Positions 25–51 (VVRKGTRKSNNDDEKSQSQSKSQSQSQ) are disordered. Over residues 41–51 (QSQSKSQSQSQ) the composition is skewed to low complexity. Lys-55 is a binding site for ATP. A disordered region spans residues 59–78 (RLGTSNNLPRKKDGGENSTE). Residue Asp-179 is the Proton acceptor of the active site. A helical membrane pass occupies residues 239-255 (MWSLGVILYILLSGYPP). The residue at position 279 (Thr-279) is a Phosphothreonine. The calmodulin-binding stretch occupies residues 337-350 (ARRKLRAAAIASVW). The stretch at 358-379 (TKKLKSLVGSYDLKEDEIENLR) forms a coiled coil. EF-hand domains lie at 408-443 (SLIP…LKNS), 444-479 (KGED…LPYD), and 486-521 (TEPG…DSSL). Asp-421, Asn-423, Asp-425, Thr-427, Glu-432, Asp-457, Asp-459, Ser-461, Cys-463, Glu-468, Asp-499, Asn-501, Asp-503, Lys-505, and Glu-510 together coordinate Ca(2+).

The protein belongs to the protein kinase superfamily. CAMK Ser/Thr protein kinase family. CaMK subfamily. Post-translationally, autophosphorylation.

It is found in the membrane. It carries out the reaction L-seryl-[protein] + ATP = O-phospho-L-seryl-[protein] + ADP + H(+). It catalyses the reaction L-threonyl-[protein] + ATP = O-phospho-L-threonyl-[protein] + ADP + H(+). Activated by calcium. Autophosphorylation may play an important role in the regulation of the kinase activity. Its function is as follows. Protein kinase that recognizes the calcium spiking induced by Nod factors and translates this signal to components controlling nodulation and mycorrhizal infection responses. This Pisum sativum (Garden pea) protein is Calcium and calcium/calmodulin-dependent serine/threonine-protein kinase (SYM9).